The following is a 421-amino-acid chain: Protein PHLOEM UNLOADING MODULATOR (421 aa).

7 helical membrane passes run 30-50, 60-80, 124-144, 158-178, 286-306, 323-343, and 397-417; these read LMPVLWSVLAIAVVTRVLFYK, IPFLGSIVFLLCALLFEALCV, HIIGLHHFLMLFIMLGFSVVF, YIFTMGVGRLLRAITFVSTIL, AMAWTEAYGGFSSAMIWLFVA, CIVAIYVGILLWKMTGFIWSA, and TVFACATVITTLTIVILALTL.

It belongs to the sphingomyelin synthase family.

It is found in the membrane. It functions in the pathway sphingolipid metabolism. Functionally, catalyzes the biosynthesis of sphingolipids with very long-chain fatty acid (VLCFA). Required for the formation of plasmodesmal cytoplasmic sleeve during the transition from type I to type II plasmodesmata to modulate post-sieve elements (SE) unloading and symplastic cell-to-cell molecular trafficking at the phloem pole pericycle (PPP)-endodermis interface in roots. The chain is Protein PHLOEM UNLOADING MODULATOR from Arabidopsis thaliana (Mouse-ear cress).